Consider the following 389-residue polypeptide: Phosphopentomutase (389 aa).

Residues D10, D282, H287, D323, H324, and H335 each contribute to the Mn(2+) site.

Belongs to the phosphopentomutase family. Requires Mn(2+) as cofactor.

Its subcellular location is the cytoplasm. It carries out the reaction 2-deoxy-alpha-D-ribose 1-phosphate = 2-deoxy-D-ribose 5-phosphate. It catalyses the reaction alpha-D-ribose 1-phosphate = D-ribose 5-phosphate. Its pathway is carbohydrate degradation; 2-deoxy-D-ribose 1-phosphate degradation; D-glyceraldehyde 3-phosphate and acetaldehyde from 2-deoxy-alpha-D-ribose 1-phosphate: step 1/2. In terms of biological role, isomerase that catalyzes the conversion of deoxy-ribose 1-phosphate (dRib-1-P) and ribose 1-phosphate (Rib-1-P) to deoxy-ribose 5-phosphate (dRib-5-P) and ribose 5-phosphate (Rib-5-P), respectively. The protein is Phosphopentomutase of Clostridium kluyveri (strain NBRC 12016).